The following is a 686-amino-acid chain: Endonuclease GajA (686 aa).

The segment at 1 to 423 (MYLKSLKIYN…NYVTTKNNYT (423 aa)) is ATPase domain. 52–56 (NCGKT) serves as a coordination point for ATP. The segment at 463 to 599 (FFSDAIIFVE…TSFEEAFILT (137 aa)) is toprim domain. Residues Glu472, Glu476, Asp559, and Glu604 each coordinate a divalent metal cation.

As to quaternary structure, homotetramer. Forms the core of the anti-phage defense complex. Interacts with GajB; 2 GajB dimers dock at opposite sides of the GajA complex to form a 4:4 GajA-GajB assembly (GajAB). GajAB interacts with Bacillus phage Phi3T Gad1 protein; this interaction forms a 4:4:8 GajAB-Gad1 complex and leads to GajAB inhibition. Requires Mg(2+) as cofactor.

In terms of biological role, component of antiviral defense system Gabija type II, composed of GajA and GajB. Probably a nicking endonuclease that is strongly inhibited by physiological levels of nucleotides (NTP and dNTP). Expression of Gabija type II in B.subtilis (strain BEST7003) confers resistance to phages phi105, and SpBeta. During viral replication, when nucleotides are rapidly consumed, it is de-suppressed and degrades target DNA. This Bacillus cereus (strain HuB5-5) protein is Endonuclease GajA.